A 232-amino-acid chain; its full sequence is uncharacterized protein (232 aa).

This is an uncharacterized protein from Homo sapiens (Human).